The primary structure comprises 563 residues: Glutamate--tRNA ligase (563 aa).

Residues 61–94 (PEEQQKEVESLGGLEQHTKKEEKPKGLPELKNTE) form a disordered region. Residues 76–94 (QHTKKEEKPKGLPELKNTE) are compositionally biased toward basic and acidic residues. The 'HIGH' region signature appears at 104-114 (PNPSGPLHIGH).

It belongs to the class-I aminoacyl-tRNA synthetase family. Glutamate--tRNA ligase type 2 subfamily.

It is found in the cytoplasm. It catalyses the reaction tRNA(Glu) + L-glutamate + ATP = L-glutamyl-tRNA(Glu) + AMP + diphosphate. In terms of biological role, catalyzes the attachment of glutamate to tRNA(Glu) in a two-step reaction: glutamate is first activated by ATP to form Glu-AMP and then transferred to the acceptor end of tRNA(Glu). In Methanosphaera stadtmanae (strain ATCC 43021 / DSM 3091 / JCM 11832 / MCB-3), this protein is Glutamate--tRNA ligase.